The chain runs to 171 residues: Spiderine-2a (171 aa).

The signal sequence occupies residues 1–18 (MKFALVLLGVCAFYLVNA). Residues 19 to 58 (TGDLETELEASELQELQEALDLIAETPLESLEAEELEEAR) constitute a propeptide, removed in mature form. The segment at 59 to 104 (KFKLPKINWGKLASKAKDVYKKGQKLAKNKNVKKALKYGKQLAENL) is linear cationic cytotoxin domain. The Oxytoxin-type inhibitor cystine knot (ICK) domain occupies 118 to 171 (NNKCWAIGTRCTDDCDCCPEHHCHCPAKSWTFGLIPCSCQVTESDKVNKCPPAE). 5 disulfides stabilise this stretch: Cys121/Cys135, Cys128/Cys140, Cys132/Cys167, Cys134/Cys156, and Cys142/Cys154.

In terms of processing, disulfide bonds. Expressed by the venom gland.

The protein resides in the secreted. Functionally, has antimicrobial, insecticidal, cytolytic and cytotoxic activity. The sequence is that of Spiderine-2a from Oxyopes takobius (Lynx spider).